The chain runs to 646 residues: Kinesin-like protein klp-20 (646 aa).

The Kinesin motor domain occupies 6–331 (KVKVVVRCRP…LRYANRAKNI (326 aa)). 91–98 (GQTGTGKT) contributes to the ATP binding site. A coiled-coil region spans residues 342-552 (KDAQLRKFQL…LRKELLLNIA (211 aa)). The interaction with klp-11 stretch occupies residues 525-550 (LEEDHQRQVEAMLDDIRQLRKELLLN). Residues 623-646 (TAEHRPRTSSKKHRASIRLQQLLT) are disordered. Basic residues predominate over residues 629–638 (RTSSKKHRAS).

This sequence belongs to the TRAFAC class myosin-kinesin ATPase superfamily. Kinesin family. Kinesin II subfamily. In terms of assembly, component of the kinesin II motor complex, a heterotrimeric complex composed of kap-1, klp-11 and klp-20. Interacts (via C-terminus) with klp-11 (via C-terminus) to form a heterodimer. Furthermore, within the heterodimer, the C-termini of klp-20 and klp-11 interact to form a coiled coil (stalk) or tail domain, and this is necessary for association with kap-1, and kinesin II motor complex activity upon IFT cargo binding. Prior to cargo binding, the klp-11/klp-20 heterodimer is autoinhibited by the tail domain of the heterodimer, which folds onto the kinesin motor domain. Cargo binding to the heterodimer relieves the autoinhibition, and allows for an extended conformation of the tail domain, and function of the heterodimer.

It is found in the cell projection. The protein resides in the cilium. It localises to the cytoplasm. Its subcellular location is the cytoskeleton. In terms of biological role, component of the kinesin II motor complex (composed of kap-1 and the heterodimeric motor proteins klp-11 and klp-20) which is required for intraflagellar transport (IFT). Heterodimerizes with klp-11 to form a 'processive' molecular motor upon IFT cargo binding, which, within the kinesin II motor complex, binds to and moves along microtubules in a unidirectional manner (without dissociation of the heterodimer), and in turn, is responsible for the IFT of cargo. Specifically, the kinesin II motor complex, together with the kinesin motor protein osm-3 moves along microtubules and is required for anterograde IFT along the middle segment of the sensory neuron cilia. In particular, the kinesin II motor complex delivers specific ciliary cargo proteins such as che-3 which are related to motility to ciliary tips. This is likely mediated by IFT complexes A and B. The chain is Kinesin-like protein klp-20 from Caenorhabditis elegans.